A 123-amino-acid chain; its full sequence is Large ribosomal subunit protein bL12 (123 aa).

It belongs to the bacterial ribosomal protein bL12 family. Homodimer. Part of the ribosomal stalk of the 50S ribosomal subunit. Forms a multimeric L10(L12)X complex, where L10 forms an elongated spine to which 2 to 4 L12 dimers bind in a sequential fashion. Binds GTP-bound translation factors.

Functionally, forms part of the ribosomal stalk which helps the ribosome interact with GTP-bound translation factors. Is thus essential for accurate translation. This chain is Large ribosomal subunit protein bL12, found in Rhodopseudomonas palustris (strain HaA2).